The sequence spans 303 residues: Cilia- and flagella-associated protein 161 (303 aa).

As to quaternary structure, microtubule inner protein component of sperm flagellar doublet microtubules.

The protein resides in the cytoplasm. The protein localises to the cytoskeleton. Its subcellular location is the cilium axoneme. It is found in the flagellum axoneme. Its function is as follows. Microtubule inner protein (MIP) part of the dynein-decorated doublet microtubules (DMTs) in cilia axoneme, which is required for motile cilia beating. This chain is Cilia- and flagella-associated protein 161, found in Mus musculus (Mouse).